An 823-amino-acid chain; its full sequence is Sphingomyelin phosphodiesterase 4 (823 aa).

Residues S130 and S245 each carry the phosphoserine modification. Residue T665 is modified to Phosphothreonine. S749 bears the Phosphoserine mark. Residues 776 to 796 (LLLLLMAFFVASLFCIGPLSC) traverse the membrane as a helical segment.

It depends on Mg(2+) as a cofactor. As to expression, expressed in skeletal muscle (at protein level). Expressed in skeletal muscle but a lower levels than isoform 1 (at protein level).

It localises to the endoplasmic reticulum membrane. It is found in the golgi apparatus membrane. The protein resides in the nucleus envelope. The protein localises to the cell membrane. Its subcellular location is the sarcolemma. It carries out the reaction a sphingomyelin + H2O = phosphocholine + an N-acylsphing-4-enine + H(+). With respect to regulation, activated by phosphatidylserine and tumor necrosis factor (TNF). Inhibited by scyphostatin. In terms of biological role, catalyzes the hydrolysis of membrane sphingomyelin to form phosphorylcholine and ceramide. It has a relevant role in the homeostasis of membrane sphingolipids, thereby influencing membrane integrity, and endoplasmic reticulum organization and function. May sensitize cells to DNA damage-induced apoptosis. In skeletal muscle, mediates TNF-stimulated oxidant production. The sequence is that of Sphingomyelin phosphodiesterase 4 (Smpd4) from Mus musculus (Mouse).